Here is a 135-residue protein sequence, read N- to C-terminus: Galectin-1 (135 aa).

Alanine 2 carries the post-translational modification N-acetylalanine. One can recognise a Galectin domain in the interval 4–135 (GLVASNLNLK…DFKIKCVAFE (132 aa)). N6-acetyllysine is present on residues lysine 13 and lysine 29. Position 30 is a phosphoserine (serine 30). A beta-D-galactoside contacts are provided by residues 45-49 (HFNPR), histidine 53, asparagine 62, and 69-72 (WGAE). The residue at position 108 (lysine 108) is an N6-acetyllysine; alternate. Lysine 108 is modified (N6-succinyllysine; alternate). At lysine 128 the chain carries N6-acetyllysine.

As to quaternary structure, homodimer. Binds LGALS3BP. Interacts with CD2, CD3, CD4, CD6, CD7, CD43, ALCAM and CD45. Interacts with laminin (via poly-N-acetyllactosamine). Interacts with SUSD2. Interacts with cargo receptor TMED10; the interaction mediates the translocation from the cytoplasm into the ERGIC (endoplasmic reticulum-Golgi intermediate compartment) and thereby secretion.

The protein resides in the secreted. It localises to the extracellular space. It is found in the extracellular matrix. Its subcellular location is the cytoplasm. Functionally, lectin that binds beta-galactoside and a wide array of complex carbohydrates. Plays a role in regulating apoptosis, cell proliferation and cell differentiation. Inhibits CD45 protein phosphatase activity and therefore the dephosphorylation of Lyn kinase. Strong inducer of T-cell apoptosis. The chain is Galectin-1 (LGALS1) from Bos taurus (Bovine).